The primary structure comprises 449 residues: UMP-CMP kinase 2, mitochondrial (449 aa).

A mitochondrion-targeting transit peptide spans 1 to 98 (MAFARRLLRG…VRAARLHQRL (98 aa)). 259-266 (GLDATGKT) contacts ATP. The stretch at 380–412 (EERLQRLQGRGMEKTREEAELEANSVFRQKVEM) forms a coiled coil.

The protein belongs to the thymidylate kinase family. As to expression, high levels are observed in myeloid, lymphoid and mesenchymal tissues.

It is found in the mitochondrion. The catalysed reaction is CMP + ATP = CDP + ADP. It catalyses the reaction dCMP + ATP = dCDP + ADP. The enzyme catalyses a 2'-deoxyribonucleoside 5'-diphosphate + ATP = a 2'-deoxyribonucleoside 5'-triphosphate + ADP. It carries out the reaction a ribonucleoside 5'-diphosphate + ATP = a ribonucleoside 5'-triphosphate + ADP. Its function is as follows. Mitochondrial nucleotide monophosphate kinase needed for salvage dNTP synthesis that mediates immunomodulatory and antiviral activities through IFN-dependent and IFN-independent pathways. Restricts the replication of multiple viruses including flaviviruses or coronaviruses. Together with viperin/RSAD2 and ddhCTP, suppresses the replication of several coronaviruses through inhibition of the viral RNA-dependent RNA polymerase activities. Concerning flaviviruses, restricts RNA translation when localized to the mitochondria independently of its kinase activity. Is able to phosphorylate dUMP, dCMP, CMP, UMP and monophosphates of the pyrimidine nucleoside analogs ddC, dFdC, araC, BVDU and FdUrd with ATP as phosphate donor. Efficacy is highest for dUMP followed by dCMP while CMP and UMP are poor substrates. Controls therefore mitochondrial DNA synthesis by supplying required deoxyribonucleotides. CMPK2-dependent mitochondrial DNA synthesis is necessary for the production of oxidized mitochondrial DNA fragments after exposure to NLRP3 activators. In turn, cytosolic oxidized mtDNA associates with the NLRP3 inflammasome complex and is required for its activation. This chain is UMP-CMP kinase 2, mitochondrial (CMPK2), found in Homo sapiens (Human).